The sequence spans 563 residues: MDNGVETPQGQKTQPINLPPDRKRLRKHDGLGKGVKRKLFAEDSSPLKKQIPACSDMETLSSPVKFGCKSRSASALDESFGKCKHETACDCSAIEELLCHESLLDSPMKLSNAHTIFSSDKWKLELEKIIASKQIFLDMSENVELVAYGETLCNLRIFEKISSPFLFDVQSEERSYSVVYVPHNKELCGQFCQPEKTMARVLGVGAYGKVFDLDKVAIKTANEDESVISAFIAGVIRAKSGADLLSHDCVINNLLISNSVCMDHKVSLSRTYDVDLYKFEDWDVRNVMNYYSVFCKLADAVRFLNLKCRINHFDISPMNIFINHKKEIIFDAVLADYSLSEIHPEYNGTCAIAKEYDRNLQLVPISRNKFCDMFNPGFRPLVANAMILVNVCEAFDGENNPLRHCNLDLCAFAQVVLLCVLRMTDKRGCREAQLYYEKRLFALANEACRLNPLRYPFAYRDACCKVLAEHVVLLGLLFYRDVVDIYEKIYDFLDERGEFGLRDLFEATFLNNSKLTRRQPIRGGLASLQSSEYGEKLLHDLRALFLITSSADLDKDTSSLFQM.

The segment covering 1–16 (MDNGVETPQGQKTQPI) has biased composition (polar residues). Positions 1 to 33 (MDNGVETPQGQKTQPINLPPDRKRLRKHDGLGK) are disordered. ATP is bound by residues 202-210 (LGVGAYGKV) and Lys219. The Proton acceptor role is filled by Asp314.

Belongs to the protein kinase superfamily. Tyr protein kinase family. HCMV ganciclovir subfamily.

Functionally, phosphorylates the antiviral nucleoside analog ganciclovir. This Human herpesvirus 6B (strain Z29) (HHV-6 variant B) protein is Probable ganciclovir kinase (U69).